Reading from the N-terminus, the 837-residue chain is Striatin-interacting protein 1 (837 aa).

Position 1 is an N-acetylmethionine (methionine 1). Disordered regions lie at residues methionine 1–aspartate 67 and alanine 333–proline 423. Pro residues predominate over residues proline 18–alanine 35. A compositionally biased stretch (low complexity) spans proline 36 to glycine 46. Over residues lysine 47 to glutamate 60 the composition is skewed to basic and acidic residues. Residues serine 59, serine 335, and serine 339 each carry the phosphoserine modification. Residues alanine 333–serine 343 show a composition bias toward low complexity. Basic and acidic residues predominate over residues lysine 356–aspartate 377. The segment covering serine 378–leucine 391 has biased composition (acidic residues). Serine 788 is modified (phosphoserine). Positions aspartate 796 to glutamine 837 are required for STRIPAK core complex formation.

The protein belongs to the STRIP family. In terms of assembly, part of the core of STRIPAK complexes composed of PP2A catalytic and scaffolding subunits, the striatins (PP2A regulatory subunits), the striatin-associated proteins MOB4, STRIP1 and STRIP2, PDCD10 and members of the STE20 kinases, such as STK24 and STK26. The STRIPAK complex can be extended by adapter proteins such as SLMAP:SIKE1, CTTNBP2 or CTTNBP2NL. Interacts with CDC42BPB. Interacts with CTTNBP2NL.

Its subcellular location is the cytoplasm. Its function is as follows. Plays a role in the regulation of cell morphology and cytoskeletal organization. Required in the cortical actin filament dynamics and cell shape. Part of the striatin-interacting phosphatase and kinase (STRIPAK) complexes. STRIPAK complexes have critical roles in protein (de)phosphorylation and are regulators of multiple signaling pathways including Hippo, MAPK, nuclear receptor and cytoskeleton remodeling. Different types of STRIPAK complexes are involved in a variety of biological processes such as cell growth, differentiation, apoptosis, metabolism and immune regulation. The protein is Striatin-interacting protein 1 (STRIP1) of Pongo abelii (Sumatran orangutan).